A 216-amino-acid polypeptide reads, in one-letter code: Sarcospan (216 aa).

Over 1-26 the chain is Cytoplasmic; it reads MGRKPSPRAQELPEEEARTCCGCRFP. A helical membrane pass occupies residues 27–47; that stretch reads LLLALLQLALGIAVTVLGFLM. At 48–59 the chain is on the extracellular side; the sequence is ASISPSLLVRDT. Residues 60–80 form a helical membrane-spanning segment; it reads PFWAGSIVCVVAYLGLFMLCV. Topologically, residues 81–95 are cytoplasmic; the sequence is SYQVDERTCVQFSMK. A helical membrane pass occupies residues 96 to 116; that stretch reads VFYFLLSALGLMVCMLAVAFA. The Extracellular portion of the chain corresponds to 117 to 166; that stretch reads AHHYSLLAQFTCETSLDSCQCKLPSSEPLSRAFVYRDVTDCTSVTGTFKL. Residues 167–187 form a helical membrane-spanning segment; it reads FLIIQMVLNLVCGLVCLLACF. Over 188 to 216 the chain is Cytoplasmic; that stretch reads VMWKHRYQVFYVGVGLRSLMASDGQLPKA.

The protein localises to the cell membrane. It localises to the sarcolemma. The protein resides in the postsynaptic cell membrane. In terms of biological role, component of the dystrophin-glycoprotein complex (DGC), a complex that spans the muscle plasma membrane and forms a link between the F-actin cytoskeleton and the extracellular matrix. Preferentially associates with the sarcoglycan subcomplex of the DGC. The protein is Sarcospan (Sspn) of Mus musculus (Mouse).